Reading from the N-terminus, the 833-residue chain is Leucine--tRNA ligase (833 aa).

The 'HIGH' region motif lies at 41–52 (PYPSGAGLHVGH). The 'KMSKS' region signature appears at 610-614 (KMSKS). Lysine 613 contributes to the ATP binding site.

It belongs to the class-I aminoacyl-tRNA synthetase family.

The protein resides in the cytoplasm. The enzyme catalyses tRNA(Leu) + L-leucine + ATP = L-leucyl-tRNA(Leu) + AMP + diphosphate. The chain is Leucine--tRNA ligase from Streptococcus agalactiae serotype III (strain NEM316).